Consider the following 117-residue polypeptide: Large ribosomal subunit protein bL20 (117 aa).

It belongs to the bacterial ribosomal protein bL20 family.

Functionally, binds directly to 23S ribosomal RNA and is necessary for the in vitro assembly process of the 50S ribosomal subunit. It is not involved in the protein synthesizing functions of that subunit. This chain is Large ribosomal subunit protein bL20, found in Nitratidesulfovibrio vulgaris (strain DSM 19637 / Miyazaki F) (Desulfovibrio vulgaris).